We begin with the raw amino-acid sequence, 198 residues long: DnaJ homolog subfamily C member 5 (198 aa).

Phosphoserine is present on residues S8, S10, S12, and S15. Residues 13–82 (GESLYHVLGL…RNIYDKYGSL (70 aa)) enclose the J domain. Y17 carries the phosphotyrosine modification. K56 is modified (N6-acetyllysine). A Phosphoserine modification is found at S151.

In terms of assembly, oligomers. Homodimer. Interacts with the chaperone complex consisting of HSC70 and SGTA. Interacts with ZDHHC13 (via ANK repeats). Interacts with ZDHHC17 (via ANK repeats). Interacts with SYT1, SYT5 and SYT7, and with SYT9, forming a complex with SNAP25. Ser-10 phosphorylation induces an order-to-disorder transition triggering the interaction with Lys-58. This conformational switch modulates DNAJC5's cellular functions by reducing binding to syntaxin and synaptogamin without altering HSC70 interactions. In terms of processing, palmitoylated. Could be palmitoylated by DHHC3, DHHC7, DHHC15 and DHHC17. Palmitoylation occurs probably in the cysteine-rich domain and regulates DNAJC5 membrane attachment. As to expression, expressed in pancreas, kidney, skeletal muscle, liver, lung, placenta, brain and heart.

It is found in the cytoplasm. The protein localises to the cytosol. It localises to the membrane. The protein resides in the cytoplasmic vesicle. Its subcellular location is the secretory vesicle. It is found in the chromaffin granule membrane. The protein localises to the melanosome. It localises to the cell membrane. Functionally, acts as a general chaperone in regulated exocytosis. Acts as a co-chaperone for the SNARE protein SNAP-25. Involved in the calcium-mediated control of a late stage of exocytosis. May have an important role in presynaptic function. May be involved in calcium-dependent neurotransmitter release at nerve endings. The protein is DnaJ homolog subfamily C member 5 of Homo sapiens (Human).